A 428-amino-acid chain; its full sequence is Trigger factor (428 aa).

The 86-residue stretch at glycine 163–proline 248 folds into the PPIase FKBP-type domain.

It belongs to the FKBP-type PPIase family. Tig subfamily.

It is found in the cytoplasm. The enzyme catalyses [protein]-peptidylproline (omega=180) = [protein]-peptidylproline (omega=0). Functionally, involved in protein export. Acts as a chaperone by maintaining the newly synthesized protein in an open conformation. Functions as a peptidyl-prolyl cis-trans isomerase. In Ruminiclostridium cellulolyticum (strain ATCC 35319 / DSM 5812 / JCM 6584 / H10) (Clostridium cellulolyticum), this protein is Trigger factor.